Reading from the N-terminus, the 997-residue chain is Burkholderia TALE-like protein 2 (997 aa).

The stretch at 19–50 is one Cryptic repeat -1 repeat; it reads LSPLERIKIEKHYGGGATLAFISNQHDELAQV. One copy of the Cryptic repeat 0 repeat lies at 51–83; it reads LSRADILKIASYDCAAQALQAVLDCGPMLGKRG. Core repeat repeat units lie at residues 84 to 116, 117 to 147, 148 to 180, 181 to 213, 214 to 244, 245 to 277, 278 to 310, 311 to 343, 344 to 376, 377 to 409, 410 to 442, 443 to 475, 476 to 508, 509 to 539, 540 to 572, 573 to 605, 606 to 638, 639 to 671, 672 to 704, 705 to 737, 738 to 770, 771 to 803, 804 to 836, 837 to 869, 870 to 902, 903 to 935, and 936 to 967; these read FSRA…GKRG, FSQV…GERG, FSRG…RERG, FNQA…GKRG, FSRV…RKRG, FHPT…RERG, FSQA…CERG, FSQP…RERG, FSQA…HERG, FSQA…RERG, VRQA…RERG, FNQA…DKRG, FNPT…RERG, FNQA…RERG, FSQP…HKRG, FGQP…RERG, FSQS…RESD, FRQA…RQRG, FNRA…DERG, FNLT…QQRG, FNLT…RQRG, FNLI…RQRD, and LSLI…MQAG. Residues 84-967 form a buD domain region; the sequence is FSRADIVRIA…KYGPVLMQAG (884 aa). 4 ANK repeats span residues 772–801, 805–834, 838–867, and 871–900; these read RQAD…RLRQ, NRAS…TLDE, NLTN…TLQQ, and NLTD…TLRQ. Residues 968–997 form a Cryptic repeat +1 repeat; that stretch reads RSNEEIVHVAARRGGAGRIRKMVALLLERQ.

It belongs to the transcription activator-like effector (TALE) family. Bat subfamily.

Binds to DNA in a sequence-specific manner. The protein is Burkholderia TALE-like protein 2 of Mycetohabitans rhizoxinica (strain DSM 19002 / CIP 109453 / HKI 454) (Paraburkholderia rhizoxinica).